A 670-amino-acid polypeptide reads, in one-letter code: Cyclic AMP-dependent transcription factor ATF-6 alpha (670 aa).

The transcription activation stretch occupies residues 1–150 (MGEPAGVAGT…SLSSAEPLKE (150 aa)). The Cytoplasmic segment spans residues 1-377 (MGEPAGVAGT…RLKVPSPKRR (377 aa)). K87 participates in a covalent cross-link: Glycyl lysine isopeptide (Lys-Gly) (interchain with G-Cter in SUMO2). The segment at 91 to 183 (QPLSPASSSY…NSKPSIQPKP (93 aa)) is disordered. Low complexity-rich tracts occupy residues 94–113 (SPASSSYSVSSPRSVDSYSS) and 123–134 (LSSSSQMSPLSL). Residue K152 forms a Glycyl lysine isopeptide (Lys-Gly) (interchain with G-Cter in ubiquitin) linkage. Residues 306-369 (VLRRQQRMIK…DEVVSENQRL (64 aa)) enclose the bZIP domain. The segment at 308 to 339 (RRQQRMIKNRESACQSRKKKKEYMLGLEARLK) is basic motif. The leucine-zipper stretch occupies residues 348 to 355 (LKKENGTL). A helical; Signal-anchor for type II membrane protein membrane pass occupies residues 378 to 398 (VVCVMIVLAFIILNYGPMSML). Over 399–670 (EQDSRRMNPS…VVSTIPESLQ (272 aa)) the chain is Lumenal. The interval 468–589 (QPLINTTESL…ATTHNKTTRP (122 aa)) is interaction with THBS4. 3 N-linked (GlcNAc...) asparagine glycosylation sites follow: N472, N584, and N643.

It belongs to the bZIP family. ATF subfamily. In terms of assembly, interacts with XBP1 isoform 2; the interaction occurs in a ER stress-dependent manner. Interacts with LACC1. As to quaternary structure, interacts with THBS4 (via EGF-like 3; calcium-binding domain) which facilitates its processing, activation and nuclear translocation. Interacts (via lumenal domain) with THBS1. Homodimer and heterodimer with ATF6-beta. The dimer interacts with the nuclear transcription factor Y (NF-Y) trimer through direct binding to NF-Y subunit C (NF-YC). Also interacts with the transcription factors GTF2I, YY1 and SRF. In terms of processing, during unfolded protein response, a fragment of approximately 50 kDa containing the cytoplasmic transcription factor domain is released by proteolysis. The cleavage seems to be performed sequentially by site-1 (MBTPS1, S1P) and site-2 (MBTPS2, S2P) proteases. N-glycosylated; in its luminal domain. The glycosylation status may serve as a sensor for ER homeostasis, resulting in ATF6 activation to trigger the unfolded protein response (UPR). Post-translationally, ubiquitinated by RNF186 at Lys-152, which is required for pattern recognition receptor-induced unfolded protein response-associated outcomes. As to expression, ubiquitous.

The protein localises to the endoplasmic reticulum membrane. Its subcellular location is the golgi apparatus membrane. It localises to the nucleus. Functionally, precursor of the transcription factor form (Processed cyclic AMP-dependent transcription factor ATF-6 alpha), which is embedded in the endoplasmic reticulum membrane. Endoplasmic reticulum stress promotes processing of this form, releasing the transcription factor form that translocates into the nucleus, where it activates transcription of genes involved in the unfolded protein response (UPR). Its function is as follows. Transcription factor that initiates the unfolded protein response (UPR) during endoplasmic reticulum stress by activating transcription of genes involved in the UPR. Binds DNA on the 5'-CCAC[GA]-3'half of the ER stress response element (ERSE) (5'-CCAAT-N(9)-CCAC[GA]-3') and of ERSE II (5'-ATTGG-N-CCACG-3'). Binding to ERSE requires binding of NF-Y to ERSE. Could also be involved in activation of transcription by the serum response factor. May play a role in foveal development and cone function in the retina. This Homo sapiens (Human) protein is Cyclic AMP-dependent transcription factor ATF-6 alpha (ATF6).